Reading from the N-terminus, the 154-residue chain is Large ribosomal subunit protein uL13 (154 aa).

It belongs to the universal ribosomal protein uL13 family. In terms of assembly, part of the 50S ribosomal subunit.

This protein is one of the early assembly proteins of the 50S ribosomal subunit, although it is not seen to bind rRNA by itself. It is important during the early stages of 50S assembly. This is Large ribosomal subunit protein uL13 from Rhodopseudomonas palustris (strain BisB18).